Consider the following 479-residue polypeptide: Ribulose bisphosphate carboxylase large chain (479 aa).

Residues 1 to 2 (MS) constitute a propeptide that is removed on maturation. Positions 123 and 173 each coordinate substrate. Lys175 functions as the Proton acceptor in the catalytic mechanism. Lys177 contributes to the substrate binding site. Positions 201, 203, and 204 each coordinate Mg(2+). Lys201 is subject to N6-carboxylysine. Ser208 carries the phosphoserine modification. The active-site Proton acceptor is His294. Substrate-binding residues include Arg295 and His327. At Thr330 the chain carries Phosphothreonine. Substrate is bound at residue Ser379.

It belongs to the RuBisCO large chain family. Type I subfamily. In terms of assembly, heterohexadecamer of 8 large chains and 8 small chains; disulfide-linked. The disulfide link is formed within the large subunit homodimers. Mg(2+) is required as a cofactor. In terms of processing, the disulfide bond which can form in the large chain dimeric partners within the hexadecamer appears to be associated with oxidative stress and protein turnover.

The protein localises to the plastid. It localises to the chloroplast. It catalyses the reaction 2 (2R)-3-phosphoglycerate + 2 H(+) = D-ribulose 1,5-bisphosphate + CO2 + H2O. The catalysed reaction is D-ribulose 1,5-bisphosphate + O2 = 2-phosphoglycolate + (2R)-3-phosphoglycerate + 2 H(+). RuBisCO catalyzes two reactions: the carboxylation of D-ribulose 1,5-bisphosphate, the primary event in carbon dioxide fixation, as well as the oxidative fragmentation of the pentose substrate in the photorespiration process. Both reactions occur simultaneously and in competition at the same active site. This chain is Ribulose bisphosphate carboxylase large chain, found in Capsella bursa-pastoris (Shepherd's purse).